The sequence spans 411 residues: Dual-specificity RNA methyltransferase RlmN (411 aa).

The Proton acceptor role is filled by Glu-124. A Radical SAM core domain is found at 130–379 (EEGRGTLCIS…IRTPRGRDIL (250 aa)). Cysteines 137 and 382 form a disulfide. Positions 144, 148, and 151 each coordinate [4Fe-4S] cluster. Residues 208-209 (GE), Ser-240, 262-264 (SLH), and Asn-339 each bind S-adenosyl-L-methionine. Residue Cys-382 is the S-methylcysteine intermediate of the active site.

The protein belongs to the radical SAM superfamily. RlmN family. [4Fe-4S] cluster is required as a cofactor.

It localises to the cytoplasm. The enzyme catalyses adenosine(2503) in 23S rRNA + 2 reduced [2Fe-2S]-[ferredoxin] + 2 S-adenosyl-L-methionine = 2-methyladenosine(2503) in 23S rRNA + 5'-deoxyadenosine + L-methionine + 2 oxidized [2Fe-2S]-[ferredoxin] + S-adenosyl-L-homocysteine. The catalysed reaction is adenosine(37) in tRNA + 2 reduced [2Fe-2S]-[ferredoxin] + 2 S-adenosyl-L-methionine = 2-methyladenosine(37) in tRNA + 5'-deoxyadenosine + L-methionine + 2 oxidized [2Fe-2S]-[ferredoxin] + S-adenosyl-L-homocysteine. Specifically methylates position 2 of adenine 2503 in 23S rRNA and position 2 of adenine 37 in tRNAs. m2A2503 modification seems to play a crucial role in the proofreading step occurring at the peptidyl transferase center and thus would serve to optimize ribosomal fidelity. The polypeptide is Dual-specificity RNA methyltransferase RlmN (Rhizobium meliloti (strain 1021) (Ensifer meliloti)).